The sequence spans 205 residues: NADH-ubiquinone oxidoreductase chain 6 (205 aa).

3 helical membrane-spanning segments follow: residues Phe-48–Val-68, Tyr-86–Asp-106, and Val-150–Thr-170.

This sequence belongs to the complex I subunit 6 family. Complex I is composed of about 45 different subunits.

It is found in the mitochondrion membrane. It catalyses the reaction a ubiquinone + NADH + 5 H(+)(in) = a ubiquinol + NAD(+) + 4 H(+)(out). In terms of biological role, core subunit of the mitochondrial membrane respiratory chain NADH dehydrogenase (Complex I) that is believed to belong to the minimal assembly required for catalysis. Complex I functions in the transfer of electrons from NADH to the respiratory chain. The immediate electron acceptor for the enzyme is believed to be ubiquinone. This Brassica campestris (Field mustard) protein is NADH-ubiquinone oxidoreductase chain 6 (ND6).